The sequence spans 171 residues: 3-hydroxydecanoyl-[acyl-carrier-protein] dehydratase (171 aa).

Residue H70 is part of the active site.

Belongs to the thioester dehydratase family. FabA subfamily. In terms of assembly, homodimer.

Its subcellular location is the cytoplasm. It carries out the reaction a (3R)-hydroxyacyl-[ACP] = a (2E)-enoyl-[ACP] + H2O. The enzyme catalyses (3R)-hydroxydecanoyl-[ACP] = (2E)-decenoyl-[ACP] + H2O. It catalyses the reaction (2E)-decenoyl-[ACP] = (3Z)-decenoyl-[ACP]. The protein operates within lipid metabolism; fatty acid biosynthesis. In terms of biological role, necessary for the introduction of cis unsaturation into fatty acids. Catalyzes the dehydration of (3R)-3-hydroxydecanoyl-ACP to E-(2)-decenoyl-ACP and then its isomerization to Z-(3)-decenoyl-ACP. Can catalyze the dehydratase reaction for beta-hydroxyacyl-ACPs with saturated chain lengths up to 16:0, being most active on intermediate chain length. The polypeptide is 3-hydroxydecanoyl-[acyl-carrier-protein] dehydratase (Stenotrophomonas maltophilia (strain R551-3)).